A 302-amino-acid chain; its full sequence is Aquaporin NIP3-1 (302 aa).

Residues 1–31 (MEPGSTPPNGSAPATPGTPAPLFSSGGPRVD) form a disordered region. Low complexity predominate over residues 7 to 21 (PPNGSAPATPGTPAP). A run of 2 helical transmembrane segments spans residues 76 to 96 (LGAE…APIV) and 102 to 122 (GAIS…TVIL). The NPA 1 motif lies at 133-135 (NPS). A run of 3 helical transmembrane segments spans residues 149–169 (LQVP…AFAL), 193–213 (AFFT…AVAT), and 217–237 (AVGE…ILVA). An NPA 2 motif is present at residues 246–248 (NPV). The helical transmembrane segment at 264–284 (WIYLLAPTLGALAGASVYKAV) threads the bilayer.

Belongs to the MIP/aquaporin (TC 1.A.8) family. NIP (TC 1.A.8.12) subfamily.

It is found in the membrane. In terms of biological role, aquaporins facilitate the transport of water and small neutral solutes across cell membranes. The sequence is that of Aquaporin NIP3-1 (NIP3-1) from Zea mays (Maize).